A 93-amino-acid polypeptide reads, in one-letter code: MKQSLAVKTFEDLFAELGERARTRPAGSATVAALDGGVHGLGKKILEEAGEVWLAAEHESDDALAGEISQLLYWTQVLMTARGLSLDDVYRKL.

This sequence belongs to the PRA-PH family.

The protein resides in the cytoplasm. The enzyme catalyses 1-(5-phospho-beta-D-ribosyl)-ATP + H2O = 1-(5-phospho-beta-D-ribosyl)-5'-AMP + diphosphate + H(+). The protein operates within amino-acid biosynthesis; L-histidine biosynthesis; L-histidine from 5-phospho-alpha-D-ribose 1-diphosphate: step 2/9. This chain is Phosphoribosyl-ATP pyrophosphatase, found in Mycolicibacterium paratuberculosis (strain ATCC BAA-968 / K-10) (Mycobacterium paratuberculosis).